The sequence spans 230 residues: UPF0688 protein C1orf174 homolog (230 aa).

Disordered regions lie at residues Met1 to Lys85 and Ala97 to Ser166. The segment covering Arg11 to Arg30 has biased composition (low complexity). A compositionally biased stretch (polar residues) spans Asp31–His48. Over residues Lys49–Ser78 the composition is skewed to basic and acidic residues. Position 180 is a phosphoserine (Ser180).

This sequence belongs to the UPF0688 family.

The protein resides in the nucleus. The sequence is that of UPF0688 protein C1orf174 homolog from Mus musculus (Mouse).